The following is a 400-amino-acid chain: MQELGKAETNSTRIIRQDDKRVTIEKDLDTEHMVLSMGPQHPSTHGVLRLECITDGEVVVEAEPYLGYLHRCFEKHCEKIDYPAIVPYTDRMDYLAGMNNELAYCITVEKLLDIEIPRRVEFIRVIVAELNRIASHLVAIGTYAIDLGAFTPFLFCFRDREHIMSLLEWISGARMLYNYIWIGGLAYDVPADFKTRVAEFVTYFRPKAKELYQLLTENEIFVKRTYDIGIMPADVAINYGWSGPMLRGSGVKWDLRRNDPYSVYPELDFDVPVPDGKFSVVGDCLSRHLVRALEMEESLKIIEQCLDKMPEEPNFNSRALIPKKIRPKAGEVYGRAENPRGELGYYIVSDGKSTSPVRCKARSSCFVNLSAMKDLSKGQLIPDLVAIIGSIDIVLGEVDR.

This sequence belongs to the complex I 49 kDa subunit family. As to quaternary structure, NDH-1 is composed of 14 different subunits. Subunits NuoB, C, D, E, F, and G constitute the peripheral sector of the complex.

The protein localises to the cell inner membrane. The enzyme catalyses a quinone + NADH + 5 H(+)(in) = a quinol + NAD(+) + 4 H(+)(out). Functionally, NDH-1 shuttles electrons from NADH, via FMN and iron-sulfur (Fe-S) centers, to quinones in the respiratory chain. The immediate electron acceptor for the enzyme in this species is believed to be a menaquinone. Couples the redox reaction to proton translocation (for every two electrons transferred, four hydrogen ions are translocated across the cytoplasmic membrane), and thus conserves the redox energy in a proton gradient. The chain is NADH-quinone oxidoreductase subunit D from Chlorobaculum tepidum (strain ATCC 49652 / DSM 12025 / NBRC 103806 / TLS) (Chlorobium tepidum).